The following is a 307-amino-acid chain: MSKVRIAISVGDLNGVGIEIAIKAHEEVSKLCAPLYCINSYMLNQASTLLNYKIPSNFEISEVGGEFAVKKGCVDKDSGRYSYDSFIHAISLCEQKKADAVVTMPIHKEAWMLAGLKYKGHTDLLREHFKRDAIMMLGCQKMFVALFSEHIPLKDVASSIKYKKLKQFFLDFNNSVPNERVAVLGLNPHAGDNGVLGNEELIITKAIKSANKKVCFEQFIGPLVPDIAFTPHIREKFKYFIAMYHDQGLAPLKALYFDESINVSLNLPIIRTSVDHGTAFDIAYEKKAKTLSYINAIKSAIALGERL.

Substrate is bound by residues His-121 and Thr-122. The a divalent metal cation site is built by His-150, His-189, and His-245. The substrate site is built by Lys-253, Asn-262, and Arg-271.

It belongs to the PdxA family. As to quaternary structure, homodimer. Requires Zn(2+) as cofactor. Mg(2+) is required as a cofactor. It depends on Co(2+) as a cofactor.

It is found in the cytoplasm. It carries out the reaction 4-(phosphooxy)-L-threonine + NAD(+) = 3-amino-2-oxopropyl phosphate + CO2 + NADH. It participates in cofactor biosynthesis; pyridoxine 5'-phosphate biosynthesis; pyridoxine 5'-phosphate from D-erythrose 4-phosphate: step 4/5. In terms of biological role, catalyzes the NAD(P)-dependent oxidation of 4-(phosphooxy)-L-threonine (HTP) into 2-amino-3-oxo-4-(phosphooxy)butyric acid which spontaneously decarboxylates to form 3-amino-2-oxopropyl phosphate (AHAP). The sequence is that of 4-hydroxythreonine-4-phosphate dehydrogenase from Sulfurimonas denitrificans (strain ATCC 33889 / DSM 1251) (Thiomicrospira denitrificans (strain ATCC 33889 / DSM 1251)).